The primary structure comprises 388 residues: Succinate--CoA ligase [ADP-forming] subunit beta (388 aa).

The ATP-grasp domain maps to 9-244 (KEILRKFGVA…LDEEDPAEIE (236 aa)). Residues Lys-46, 53 to 55 (GRG), Glu-99, Ala-102, and Glu-107 each bind ATP. The Mg(2+) site is built by Asn-199 and Asp-213. Substrate contacts are provided by residues Asn-264 and 321-323 (GIM).

It belongs to the succinate/malate CoA ligase beta subunit family. In terms of assembly, heterotetramer of two alpha and two beta subunits. The cofactor is Mg(2+).

It carries out the reaction succinate + ATP + CoA = succinyl-CoA + ADP + phosphate. The enzyme catalyses GTP + succinate + CoA = succinyl-CoA + GDP + phosphate. It functions in the pathway carbohydrate metabolism; tricarboxylic acid cycle; succinate from succinyl-CoA (ligase route): step 1/1. Functionally, succinyl-CoA synthetase functions in the citric acid cycle (TCA), coupling the hydrolysis of succinyl-CoA to the synthesis of either ATP or GTP and thus represents the only step of substrate-level phosphorylation in the TCA. The beta subunit provides nucleotide specificity of the enzyme and binds the substrate succinate, while the binding sites for coenzyme A and phosphate are found in the alpha subunit. The protein is Succinate--CoA ligase [ADP-forming] subunit beta of Burkholderia lata (strain ATCC 17760 / DSM 23089 / LMG 22485 / NCIMB 9086 / R18194 / 383).